A 317-amino-acid polypeptide reads, in one-letter code: Melanocyte-stimulating hormone receptor (317 aa).

The Extracellular portion of the chain corresponds to 1 to 37 (MPVQGSQRRLLGSLNSTPTAPPHLGLAANQTGARCLE). The N-linked (GlcNAc...) asparagine glycan is linked to Asn29. The helical transmembrane segment at 38–63 (VSIPDGLFLSLGLVSLVENVLVVTAI) threads the bilayer. Topologically, residues 64–72 (AKNRNLHSP) are cytoplasmic. Residues 73-93 (MYCFICCLALSDLLVSGSNML) traverse the membrane as a helical segment. The Extracellular segment spans residues 94–118 (ETAVILLLEAGALAARAAVVQQLDN). The chain crosses the membrane as a helical span at residues 119–140 (VIDVITCSSMLSSLCFLGAIAV). Residues 141 to 163 (DRYISIFYALRYHSIVTLPRARR) are Cytoplasmic-facing. The helical transmembrane segment at 164 to 183 (AVAAIWVASVLFSMLFIAYY) threads the bilayer. Topologically, residues 184-191 (DHAAVLLC) are extracellular. Residues 192–211 (LVVFFLAMLVLMAVLYIHML) traverse the membrane as a helical segment. Residues 212–240 (VRACQHAQGIARLHKRQRPAHQGFGLKGA) are Cytoplasmic-facing. A helical membrane pass occupies residues 241–266 (ATLTILLGIFFLCWGPFFLHLTLIVL). At 267 to 279 (CPQHPTCSCIFKN) the chain is on the extracellular side. The helical transmembrane segment at 280–300 (FNLFLALIICNAIIDPLIYAF) threads the bilayer. Residues 301-317 (RSQELRRTLKEVLLCSW) are Cytoplasmic-facing. Cys315 carries the S-palmitoyl cysteine lipid modification.

This sequence belongs to the G-protein coupled receptor 1 family. In terms of assembly, interacts with MGRN1, but does not undergo MGRN1-mediated ubiquitination; this interaction competes with GNAS-binding and thus inhibits agonist-induced cAMP production. Interacts with OPN3; the interaction results in a decrease in MC1R-mediated cAMP signaling and ultimately a decrease in melanin production in melanocytes.

It localises to the cell membrane. Its function is as follows. Receptor for MSH (alpha, beta and gamma) and ACTH. The activity of this receptor is mediated by G proteins which activate adenylate cyclase. Mediates melanogenesis, the production of eumelanin (black/brown) and phaeomelanin (red/yellow), via regulation of cAMP signaling in melanocytes. The polypeptide is Melanocyte-stimulating hormone receptor (MC1R) (Cercopithecus diana (Diana monkey)).